The sequence spans 871 residues: Alanine--tRNA ligase (871 aa).

Zn(2+)-binding residues include His561, His565, Cys665, and His669.

The protein belongs to the class-II aminoacyl-tRNA synthetase family. The cofactor is Zn(2+).

It is found in the cytoplasm. It carries out the reaction tRNA(Ala) + L-alanine + ATP = L-alanyl-tRNA(Ala) + AMP + diphosphate. Functionally, catalyzes the attachment of alanine to tRNA(Ala) in a two-step reaction: alanine is first activated by ATP to form Ala-AMP and then transferred to the acceptor end of tRNA(Ala). Also edits incorrectly charged Ser-tRNA(Ala) and Gly-tRNA(Ala) via its editing domain. The chain is Alanine--tRNA ligase from Dehalococcoides mccartyi (strain ATCC BAA-2100 / JCM 16839 / KCTC 5957 / BAV1).